We begin with the raw amino-acid sequence, 827 residues long: DNA gyrase subunit A (827 aa).

The Topo IIA-type catalytic domain maps to 38–501 (LPDARDGLKP…SYENIDIEDL (464 aa)). The O-(5'-phospho-DNA)-tyrosine intermediate role is filled by tyrosine 126. The GyrA-box signature appears at 528–534 (QNRGGKG).

It belongs to the type II topoisomerase GyrA/ParC subunit family. In terms of assembly, heterotetramer, composed of two GyrA and two GyrB chains. In the heterotetramer, GyrA contains the active site tyrosine that forms a transient covalent intermediate with DNA, while GyrB binds cofactors and catalyzes ATP hydrolysis.

It is found in the cytoplasm. It carries out the reaction ATP-dependent breakage, passage and rejoining of double-stranded DNA.. Functionally, a type II topoisomerase that negatively supercoils closed circular double-stranded (ds) DNA in an ATP-dependent manner to modulate DNA topology and maintain chromosomes in an underwound state. Negative supercoiling favors strand separation, and DNA replication, transcription, recombination and repair, all of which involve strand separation. Also able to catalyze the interconversion of other topological isomers of dsDNA rings, including catenanes and knotted rings. Type II topoisomerases break and join 2 DNA strands simultaneously in an ATP-dependent manner. The chain is DNA gyrase subunit A from Helicobacter pylori (strain ATCC 700392 / 26695) (Campylobacter pylori).